The following is a 427-amino-acid chain: Enolase (427 aa).

Q163 serves as a coordination point for (2R)-2-phosphoglycerate. The active-site Proton donor is E205. D242, E285, and D312 together coordinate Mg(2+). The (2R)-2-phosphoglycerate site is built by K337, R366, S367, and K388. The active-site Proton acceptor is K337.

This sequence belongs to the enolase family. Requires Mg(2+) as cofactor.

It localises to the cytoplasm. The protein resides in the secreted. The protein localises to the cell surface. It catalyses the reaction (2R)-2-phosphoglycerate = phosphoenolpyruvate + H2O. It functions in the pathway carbohydrate degradation; glycolysis; pyruvate from D-glyceraldehyde 3-phosphate: step 4/5. Its function is as follows. Catalyzes the reversible conversion of 2-phosphoglycerate (2-PG) into phosphoenolpyruvate (PEP). It is essential for the degradation of carbohydrates via glycolysis. The chain is Enolase from Burkholderia thailandensis (strain ATCC 700388 / DSM 13276 / CCUG 48851 / CIP 106301 / E264).